A 363-amino-acid chain; its full sequence is Flagellar P-ring protein (363 aa).

Positions 1–20 (MKIKLILACALMVFSAASSA) are cleaved as a signal peptide.

This sequence belongs to the FlgI family. In terms of assembly, the basal body constitutes a major portion of the flagellar organelle and consists of four rings (L,P,S, and M) mounted on a central rod.

It is found in the periplasm. Its subcellular location is the bacterial flagellum basal body. Assembles around the rod to form the L-ring and probably protects the motor/basal body from shearing forces during rotation. This chain is Flagellar P-ring protein, found in Shewanella loihica (strain ATCC BAA-1088 / PV-4).